The chain runs to 68 residues: Large ribosomal subunit protein bL31 (68 aa).

Zn(2+) contacts are provided by Cys-16, Cys-18, Cys-36, and Cys-39.

The protein belongs to the bacterial ribosomal protein bL31 family. Type A subfamily. Part of the 50S ribosomal subunit. It depends on Zn(2+) as a cofactor.

Its function is as follows. Binds the 23S rRNA. The sequence is that of Large ribosomal subunit protein bL31 from Sorangium cellulosum (strain So ce56) (Polyangium cellulosum (strain So ce56)).